We begin with the raw amino-acid sequence, 121 residues long: Cysteine-rich neurotrophic factor (121 aa).

The signal sequence occupies residues 1 to 18 (MLLKLIVALSLTLTLASA). Asn57 carries N-linked (GlcNAc...) asparagine glycosylation.

The protein resides in the secreted. In terms of biological role, interacts with the p75 low-affinity neurotrophin receptor. Evokes neurite outgrowth and modulated calcium currents in pedal motor neurons. May be involved in target-derived trophic support for motor neurons. The protein is Cysteine-rich neurotrophic factor of Lymnaea stagnalis (Great pond snail).